Here is a 492-residue protein sequence, read N- to C-terminus: Sestrin-3 (492 aa).

The segment at 62-243 is N-terminal domain; may mediate the alkylhydroperoxide reductase activity; sequence LVEEYSTSGR…VCDLANDNSI (182 aa). C121 serves as the catalytic Cysteine sulfenic acid (-SOH) intermediate. The tract at residues 310–492 is C-terminal domain; mediates TORC1 regulation; that stretch reads PHSDFEDDVI…ALRAITRHLT (183 aa). Residues 386-389, T398, and E463 each bind L-leucine; that span reads TYNT.

The protein belongs to the sestrin family. As to quaternary structure, interacts with the GATOR2 complex which is composed of MIOS, SEC13, SEH1L, WDR24 and WDR59; the interaction is not regulated by leucine. Interacts with RRAGA, RRAGB, RRAGC and RRAGD; may function as a guanine nucleotide dissociation inhibitor for RRAGs and regulate them. Interacts with the TORC2 complex; through RICTOR. In terms of tissue distribution, detected in liver and skeletal muscles.

It localises to the cytoplasm. The enzyme catalyses a hydroperoxide + L-cysteinyl-[protein] = S-hydroxy-L-cysteinyl-[protein] + an alcohol. Its function is as follows. May function as an intracellular leucine sensor that negatively regulates the TORC1 signaling pathway. May also regulate the insulin-receptor signaling pathway through activation of TORC2. This metabolic regulator may also play a role in protection against oxidative and genotoxic stresses. May prevent the accumulation of reactive oxygen species (ROS) through the alkylhydroperoxide reductase activity born by the N-terminal domain of the protein. In Mus musculus (Mouse), this protein is Sestrin-3.